The chain runs to 545 residues: Thermosome subunit (545 aa).

This sequence belongs to the TCP-1 chaperonin family. In terms of assembly, forms an oligomeric complex of eight-membered rings.

In terms of biological role, molecular chaperone; binds unfolded polypeptides in vitro, and has a weak ATPase activity. This is Thermosome subunit (ths) from Desulfurococcus sp. (strain SY).